A 253-amino-acid chain; its full sequence is MATVKVRDVVFGAGAPKICVPMVGRTLDQLVNETEVLKVLDFDLAEWRVDFFEHVEDIEEVKSALFEIRARLGEKPLLFTFRSKREGGQREVSDDYYGALNKALAQTGEIDLVDVELFQEQSVVRELVDTAHEHGVKVVMSSHDFARTPVKEEILMRLCRMQELGADLPKIAVMPQNASDVLVLLDATNTMREHFADRPFITMSMSGLGGVTRLAGEVFGSALTFGSAVEASAPGQINAADLRNILNLLHMQT.

Residues 46-48 (EWR) and Arg82 each bind 3-dehydroquinate. His143 acts as the Proton donor/acceptor in catalysis. Lys170 acts as the Schiff-base intermediate with substrate in catalysis. 3-dehydroquinate-binding residues include Arg213, Ser232, and Gln236.

The protein belongs to the type-I 3-dehydroquinase family. As to quaternary structure, homodimer.

It catalyses the reaction 3-dehydroquinate = 3-dehydroshikimate + H2O. It participates in metabolic intermediate biosynthesis; chorismate biosynthesis; chorismate from D-erythrose 4-phosphate and phosphoenolpyruvate: step 3/7. Functionally, involved in the third step of the chorismate pathway, which leads to the biosynthesis of aromatic amino acids. Catalyzes the cis-dehydration of 3-dehydroquinate (DHQ) and introduces the first double bond of the aromatic ring to yield 3-dehydroshikimate. The protein is 3-dehydroquinate dehydratase of Syntrophotalea carbinolica (strain DSM 2380 / NBRC 103641 / GraBd1) (Pelobacter carbinolicus).